The primary structure comprises 553 residues: Fusion glycoprotein F0 (553 aa).

Positions 1–31 are cleaved as a signal peptide; it reads MGSRSSTRIPVPPMLIIRIVLTLSCIRLTSS. The Extracellular segment spans residues 32 to 500; it reads LDGRPLAAAG…VNVRLTSTSA (469 aa). Disulfide bonds link C76/C199, C338/C347, C362/C370, C394/C399, and C401/C424. N-linked (GlcNAc...) asparagine; by host glycosylation is present at N85. The interval 117–141 is fusion peptide; the sequence is FIGAIIGSVALGVATAAQITAASAL. The stretch at 142–170 forms a coiled coil; the sequence is IQANQNAANILRLKESIAATNEAVHEVTD. N191 is a glycosylation site (N-linked (GlcNAc...) asparagine; by host). An N-linked (GlcNAc...) asparagine; by host glycan is attached at N366. 2 N-linked (GlcNAc...) asparagine; by host glycosylation sites follow: N447 and N471. Residues 466 to 491 adopt a coiled-coil conformation; sequence ELGNVNNSISNALNKLEESNSKLDKV. The chain crosses the membrane as a helical span at residues 501 to 521; the sequence is LITYIVLTVISLVFGVLSLVL. Residues 522-553 are Cytoplasmic-facing; it reads ACYLMYKQKAQQKTLLWLGNNTLDQMRATTKI. C523 is lipidated: S-palmitoyl cysteine; by host.

Belongs to the paramyxoviruses fusion glycoprotein family. Homotrimer of disulfide-linked F1-F2. The inactive precursor F0 is glycosylated and proteolytically cleaved into F1 and F2 to be functionally active. The cleavage is mediated by cellular proteases during the transport and maturation of the polypeptide.

It is found in the virion membrane. The protein localises to the host cell membrane. Functionally, class I viral fusion protein. Under the current model, the protein has at least 3 conformational states: pre-fusion native state, pre-hairpin intermediate state, and post-fusion hairpin state. During viral and plasma cell membrane fusion, the heptad repeat (HR) regions assume a trimer-of-hairpins structure, positioning the fusion peptide in close proximity to the C-terminal region of the ectodomain. The formation of this structure appears to drive apposition and subsequent fusion of viral and plasma cell membranes. Directs fusion of viral and cellular membranes leading to delivery of the nucleocapsid into the cytoplasm. This fusion is pH independent and occurs directly at the outer cell membrane. The trimer of F1-F2 (F protein) probably interacts with HN at the virion surface. Upon HN binding to its cellular receptor, the hydrophobic fusion peptide is unmasked and interacts with the cellular membrane, inducing the fusion between cell and virion membranes. Later in infection, F proteins expressed at the plasma membrane of infected cells could mediate fusion with adjacent cells to form syncytia, a cytopathic effect that could lead to tissue necrosis. The sequence is that of Fusion glycoprotein F0 (F) from Newcastle disease virus (strain Her/33) (NDV).